The primary structure comprises 128 residues: Small ribosomal subunit protein eS8 (128 aa).

Belongs to the eukaryotic ribosomal protein eS8 family. In terms of assembly, part of the 30S ribosomal subunit.

This is Small ribosomal subunit protein eS8 from Methanococcus maripaludis (strain C7 / ATCC BAA-1331).